The primary structure comprises 170 residues: MQPTAIDSKSKSHPNERVAFIQACWHKDIVDQSRKGFVAEMAKQGYAESDIDIFEVGGAFEIPLHAKLLANTGRYAGIVGAALVVDGGIYRHEFVAQSVVSALMQVQLETEVPVFSVVLTPHHFHAGEEHQKFFFDHFSHKGEEAAKTCADTLNKVRSLRRLDAQQKAAC.

5-amino-6-(D-ribitylamino)uracil contacts are provided by residues Trp25, 59–61 (AFE), and 83–85 (LVV). Catalysis depends on Arg91, which acts as the Proton donor. Residue Ser116 participates in 5-amino-6-(D-ribitylamino)uracil binding. His130 contacts (2S)-2-hydroxy-3-oxobutyl phosphate.

The protein belongs to the DMRL synthase family. In terms of assembly, forms an icosahedral capsid composed of 60 subunits, arranged as a dodecamer of pentamers.

The enzyme catalyses (2S)-2-hydroxy-3-oxobutyl phosphate + 5-amino-6-(D-ribitylamino)uracil = 6,7-dimethyl-8-(1-D-ribityl)lumazine + phosphate + 2 H2O + H(+). The protein operates within cofactor biosynthesis; riboflavin biosynthesis; riboflavin from 2-hydroxy-3-oxobutyl phosphate and 5-amino-6-(D-ribitylamino)uracil: step 1/2. In terms of biological role, catalyzes the formation of 6,7-dimethyl-8-ribityllumazine by condensation of 5-amino-6-(D-ribitylamino)uracil with 3,4-dihydroxy-2-butanone 4-phosphate. This is the penultimate step in the biosynthesis of riboflavin. This is 6,7-dimethyl-8-ribityllumazine synthase 2 from Pseudomonas syringae pv. tomato (strain ATCC BAA-871 / DC3000).